A 622-amino-acid polypeptide reads, in one-letter code: Polygalacturonase 1 beta-like protein 1 (622 aa).

The N-terminal stretch at 1-21 (MRKQFVFLLPFLSRLYHVVIA) is a signal peptide. The FXXY 1 repeat unit spans residues 118-121 (FSVY). N125 carries an N-linked (GlcNAc...) asparagine glycan. 11 FXXY repeats span residues 126-129 (FTNY), 140-143 (FKKY), 154-157 (FRRY), 168-171 (FTGY), 182-185 (FNSY), 196-199 (FKNY), 210-213 (FKAY), 224-227 (FKTY), 239-242 (FTSY), 253-256 (FSSY), and 267-270 (FSNY). N278 carries an N-linked (GlcNAc...) asparagine glycan. FXXY repeat units follow at residues 281–284 (FKGY), 295–298 (FKSY), 309–312 (FLNY), 323–326 (FSSY), 337–340 (FVNY), 351–354 (FSGY), and 365–368 (FKTY). An N-linked (GlcNAc...) asparagine glycan is attached at N371. FXXY repeat units lie at residues 374–377 (FKDY) and 384–387 (FAKY). 2 N-linked (GlcNAc...) asparagine glycosylation sites follow: N388 and N461. A BURP domain is found at 407 to 621 (FFRESMLKEG…FENDMNWAIA (215 aa)).

In terms of tissue distribution, expressed in flowers and stems.

It is found in the secreted. The protein localises to the extracellular space. Its subcellular location is the apoplast. It localises to the cell wall. In terms of biological role, involved in cell size determination. The protein is Polygalacturonase 1 beta-like protein 1 of Arabidopsis thaliana (Mouse-ear cress).